The following is a 429-amino-acid chain: Adenylosuccinate synthetase (429 aa).

Residues Gly13–Lys19 and Gly41–Thr43 contribute to the GTP site. The active-site Proton acceptor is the Asp14. Mg(2+)-binding residues include Asp14 and Gly41. Residues Asp14–Lys17, Asn39–His42, Thr130, Arg144, Gln224, Thr239, and Arg303 contribute to the IMP site. His42 serves as the catalytic Proton donor. Ala299–Arg305 is a substrate binding site. GTP is bound by residues Arg305, Lys331–Asp333, and Ser412–Gly414.

This sequence belongs to the adenylosuccinate synthetase family. Homodimer. Mg(2+) is required as a cofactor.

The protein localises to the cytoplasm. The catalysed reaction is IMP + L-aspartate + GTP = N(6)-(1,2-dicarboxyethyl)-AMP + GDP + phosphate + 2 H(+). It functions in the pathway purine metabolism; AMP biosynthesis via de novo pathway; AMP from IMP: step 1/2. Its function is as follows. Plays an important role in the de novo pathway of purine nucleotide biosynthesis. Catalyzes the first committed step in the biosynthesis of AMP from IMP. The protein is Adenylosuccinate synthetase of Psychrobacter cryohalolentis (strain ATCC BAA-1226 / DSM 17306 / VKM B-2378 / K5).